We begin with the raw amino-acid sequence, 301 residues long: Rhodopsin (301 aa).

Topologically, residues 1 to 18 (LHMIHLHWYQYPPMNPMM) are extracellular. Residues 19 to 43 (YPLLLIFMLFTGILCLAGNFVTIWV) traverse the membrane as a helical segment. Residues 44–55 (FMNTKSLRTPAN) are Cytoplasmic-facing. A helical membrane pass occupies residues 56-78 (LLVVNLAMSDFLMMFTMFPPMMV). Topologically, residues 79 to 92 (TCYYHTWTLGPTFC) are extracellular. A disulfide bridge links Cys92 with Cys169. Residues 93–115 (QVYAFLGNLCGCASIWTMVFITF) form a helical membrane-spanning segment. The short motif at 116 to 118 (DRY) is the 'Ionic lock' involved in activated form stabilization element. Residues 116–134 (DRYNVIVKGVAGEPLSNKK) lie on the Cytoplasmic side of the membrane. Residues 135–155 (AAMWILSVWVLSTAWCMAPFF) traverse the membrane as a helical segment. At 156–182 (GWNSYVPEGNLTGCGTDYLSEDILSRS) the chain is on the extracellular side. N-linked (GlcNAc...) asparagine glycosylation is present at Asn165. The helical transmembrane segment at 183-204 (YLYIYSTWVYFLPLTITIYCYV) threads the bilayer. The Cytoplasmic portion of the chain corresponds to 205-245 (FIIKAVAAHEKGMRDQAKKMGIKSLRNEEAQKTSAECRLAK). The helical transmembrane segment at 246-267 (IAMTTVALWFIAWTPYLLINWV) threads the bilayer. At 268-278 (GMFARSYLSPV) the chain is on the extracellular side. A helical transmembrane segment spans residues 279–300 (YTIWGYVFAKANAVYNPIVYAI). N6-(retinylidene)lysine is present on Lys288.

It belongs to the G-protein coupled receptor 1 family. Opsin subfamily. As to quaternary structure, homodimer. Interacts with GNAQ. Post-translationally, contains one covalently linked retinal chromophore.

The protein localises to the cell projection. Its subcellular location is the rhabdomere membrane. In terms of biological role, photoreceptor required for image-forming vision at low light intensity. Can use both retinal and 3-dehydroretinal as visual pigment. Light-induced isomerization of 11-cis to all-trans retinal triggers a conformational change that activates signaling via G-proteins. Signaling via GNAQ probably mediates the activation of phospholipase C. In Faxonius virilis (Virile crayfish), this protein is Rhodopsin (RHO).